The following is a 302-amino-acid chain: MKFKRYLQVTKPGIIFGNLISAAGGFLLAAQGSVDWWLLAATVVGLSLVVASGCAINNCIDQDIDAKMARTQKRVLVTGAMSTKAALAHGVVLGLAGFALLWFCTNPLATGCVLFGFVIYVGVYSLYMKRNSVYGTLVGSLSGAVPPVAGYCAVTGRFDMGAAILLLMFSLWQMPHSYAIAIFRFKDYEAAGIPVLPVVKGISAAKQQIVLYILAFAAATVMLVFGGYAGYGYLAVAVATSLWWLKMALSGYKRETDDRAWARQVFFFSIITITSLSVMMAVDGQTPPHSRAVMTADAGHYG.

The next 9 helical transmembrane spans lie at I14–V34, W36–I56, A85–T105, L108–M128, V133–A153, A163–F183, I209–A229, G230–S250, and Q264–G284.

The protein belongs to the UbiA prenyltransferase family. Protoheme IX farnesyltransferase subfamily.

It localises to the cell inner membrane. The catalysed reaction is heme b + (2E,6E)-farnesyl diphosphate + H2O = Fe(II)-heme o + diphosphate. The protein operates within porphyrin-containing compound metabolism; heme O biosynthesis; heme O from protoheme: step 1/1. In terms of biological role, converts heme B (protoheme IX) to heme O by substitution of the vinyl group on carbon 2 of heme B porphyrin ring with a hydroxyethyl farnesyl side group. The sequence is that of Protoheme IX farnesyltransferase 2 from Chromobacterium violaceum (strain ATCC 12472 / DSM 30191 / JCM 1249 / CCUG 213 / NBRC 12614 / NCIMB 9131 / NCTC 9757 / MK).